Reading from the N-terminus, the 635-residue chain is MMRGLLLAGALGLPLAVLAHPTHHAHGLQRRTVDLNSFRLHQAAKYINATESSSDVSSSFSPFTEQSYVETATQLVKNILPDATFRVVKDHYIGSNGVAHVNFRQTAHGLDIDNADFNVNVGKNGKIFSYGHSFYTGKIPDANPLTKRDYTDPVAALRGTNEALQLSITLDQVSTEATEDKESFNFKGVSGTVSDPKAQLVYLVKEDGSLALTWKVETDIDSNWLLTYIDANTGKDVHGVVDYVAEADYQVYAWGINDPTEGPRTVISDPWDSSASAFTWISDGENNYTTTRGNNGIAQSNPTGGSQYLKNYRPDSPDLKFQYPYSLNATPPESYIDASITQLFYTANTYHDLLYTLGFNEEAGNFQYDNNGKGGAGNDYVILNAQDGSGTNNANFATPPDGQPGRMRMYIWTESQPYRDGSFEAGIVIHEYTHGLSNRLTGGPANSRCLNALESGGMGEGWGDFMATAIRLKAGDTHSTDYTMGEWAANKKGGIRAYPFSTSLETNPLTYTSLNELDEVHAIGAVWANVLYELLWNLIDKHGKNDGPKPEFKDGVPTDGKYLAMKLVIDGMALQPCNPNCVQARDAILDADKALTDGANKCEIWKAFAKRGLGEGAEYHASRRVGSDKVPSDAC.

Positions 1-19 (MMRGLLLAGALGLPLAVLA) are cleaved as a signal peptide. Positions 20-246 (HPTHHAHGLQ…VHGVVDYVAE (227 aa)) are excised as a propeptide. Residue asparagine 287 is glycosylated (N-linked (GlcNAc...) asparagine). Residues 290–309 (TTRGNNGIAQSNPTGGSQYL) show a composition bias toward polar residues. The segment at 290–311 (TTRGNNGIAQSNPTGGSQYLKN) is disordered. Histidine 430 contacts Zn(2+). Glutamate 431 is an active-site residue. Histidine 434 is a binding site for Zn(2+).

This sequence belongs to the peptidase M36 family. Requires Zn(2+) as cofactor.

It is found in the secreted. Its function is as follows. Secreted metalloproteinase that allows assimilation of proteinaceous substrates. This Aspergillus flavus (strain ATCC 200026 / FGSC A1120 / IAM 13836 / NRRL 3357 / JCM 12722 / SRRC 167) protein is Extracellular metalloproteinase mep (mep).